The chain runs to 206 residues: Bacteriochlorophyll synthase 23 kDa chain (206 aa).

It participates in porphyrin-containing compound metabolism; bacteriochlorophyll biosynthesis (light-independent). The polypeptide is Bacteriochlorophyll synthase 23 kDa chain (bchJ) (Cereibacter sphaeroides (strain ATCC 17023 / DSM 158 / JCM 6121 / CCUG 31486 / LMG 2827 / NBRC 12203 / NCIMB 8253 / ATH 2.4.1.) (Rhodobacter sphaeroides)).